A 146-amino-acid polypeptide reads, in one-letter code: Small ribosomal subunit protein bS6 (146 aa).

The segment at 106–146 is disordered; the sequence is QAAATQRAAERRAQREAERNAAQAQSSASNQARTAATTSGK. Positions 113–124 are enriched in basic and acidic residues; sequence AAERRAQREAER. Residues 125-146 are compositionally biased toward low complexity; that stretch reads NAAQAQSSASNQARTAATTSGK.

It belongs to the bacterial ribosomal protein bS6 family.

In terms of biological role, binds together with bS18 to 16S ribosomal RNA. The protein is Small ribosomal subunit protein bS6 of Oenococcus oeni (strain ATCC BAA-331 / PSU-1).